The chain runs to 618 residues: UvrABC system protein C (618 aa).

The GIY-YIG domain occupies 19-97; sequence SEPGIYRMLD…IKALRPKYNV (79 aa). Residues 208 to 243 enclose the UVR domain; that stretch reads QIILDELAERMKNAVSQLNFEEAAVLRDQIKNLRLI.

This sequence belongs to the UvrC family. Interacts with UvrB in an incision complex.

The protein localises to the cytoplasm. Functionally, the UvrABC repair system catalyzes the recognition and processing of DNA lesions. UvrC both incises the 5' and 3' sides of the lesion. The N-terminal half is responsible for the 3' incision and the C-terminal half is responsible for the 5' incision. In Legionella pneumophila (strain Lens), this protein is UvrABC system protein C.